The sequence spans 25 residues: EAEPKPFNPVCYEPKEVGPCKAYVP.

Residues 1 to 25 form the BPTI/Kunitz inhibitor domain; it reads EAEPKPFNPVCYEPKEVGPCKAYVP.

Its function is as follows. Serine protease inhibitor. Inhibits trypsin, elastase and plasmin. Does not inhibit kallikrein. This is Kunitz-type serine protease inhibitor RsTIS5 from Rhipicephalus sanguineus (Brown dog tick).